A 703-amino-acid polypeptide reads, in one-letter code: Elongation factor G 1 (703 aa).

The region spanning 8 to 291 is the tr-type G domain; the sequence is ERYRNIGISA…AVIDYLPSPV (284 aa). GTP is bound by residues 17-24, 88-92, and 142-145; these read AHIDAGKT, DTPGH, and NKMD.

The protein belongs to the TRAFAC class translation factor GTPase superfamily. Classic translation factor GTPase family. EF-G/EF-2 subfamily.

It is found in the cytoplasm. Its function is as follows. Catalyzes the GTP-dependent ribosomal translocation step during translation elongation. During this step, the ribosome changes from the pre-translocational (PRE) to the post-translocational (POST) state as the newly formed A-site-bound peptidyl-tRNA and P-site-bound deacylated tRNA move to the P and E sites, respectively. Catalyzes the coordinated movement of the two tRNA molecules, the mRNA and conformational changes in the ribosome. The protein is Elongation factor G 1 of Burkholderia orbicola (strain AU 1054).